The sequence spans 304 residues: Protease HtpX homolog (304 aa).

2 helical membrane-spanning segments follow: residues 14–34 (VFIILGFFIFVLMVGAAIGII) and 39–59 (YLNGLILAAVIGAFYILIMVM). His-144 is a Zn(2+) binding site. Glu-145 is an active-site residue. His-148 is a binding site for Zn(2+). Transmembrane regions (helical) follow at residues 159 to 179 (IAIALVAVIAILSDIAMRMIF) and 202 to 222 (AIIYIVALIFVILAPIIATAI). Glu-231 provides a ligand contact to Zn(2+).

This sequence belongs to the peptidase M48B family. Zn(2+) is required as a cofactor.

It localises to the cell membrane. In Listeria monocytogenes serotype 4a (strain HCC23), this protein is Protease HtpX homolog.